A 198-amino-acid chain; its full sequence is V-type ATP synthase subunit E (198 aa).

The protein belongs to the V-ATPase E subunit family.

Functionally, produces ATP from ADP in the presence of a proton gradient across the membrane. This Clostridium perfringens (strain SM101 / Type A) protein is V-type ATP synthase subunit E.